The following is a 102-amino-acid chain: Co-chaperonin GroES (102 aa).

The protein belongs to the GroES chaperonin family. Heptamer of 7 subunits arranged in a ring. Interacts with the chaperonin GroEL.

It localises to the cytoplasm. Together with the chaperonin GroEL, plays an essential role in assisting protein folding. The GroEL-GroES system forms a nano-cage that allows encapsulation of the non-native substrate proteins and provides a physical environment optimized to promote and accelerate protein folding. GroES binds to the apical surface of the GroEL ring, thereby capping the opening of the GroEL channel. This Chlamydia caviae (strain ATCC VR-813 / DSM 19441 / 03DC25 / GPIC) (Chlamydophila caviae) protein is Co-chaperonin GroES.